The primary structure comprises 468 residues: Glutamate--tRNA ligase (468 aa).

The 'HIGH' region signature appears at 12–22 (PSPTGFIHLGN). The short motif at 244 to 248 (KMSKR) is the 'KMSKS' region element. Lys-247 is a binding site for ATP.

The protein belongs to the class-I aminoacyl-tRNA synthetase family. Glutamate--tRNA ligase type 1 subfamily. As to quaternary structure, monomer.

Its subcellular location is the cytoplasm. It carries out the reaction tRNA(Glu) + L-glutamate + ATP = L-glutamyl-tRNA(Glu) + AMP + diphosphate. In terms of biological role, catalyzes the attachment of glutamate to tRNA(Glu) in a two-step reaction: glutamate is first activated by ATP to form Glu-AMP and then transferred to the acceptor end of tRNA(Glu). This is Glutamate--tRNA ligase from Polynucleobacter asymbioticus (strain DSM 18221 / CIP 109841 / QLW-P1DMWA-1) (Polynucleobacter necessarius subsp. asymbioticus).